Here is a 657-residue protein sequence, read N- to C-terminus: Histidine ammonia-lyase (657 aa).

Positions alanine 253–glycine 255 form a cross-link, 5-imidazolinone (Ala-Gly). Serine 254 is subject to 2,3-didehydroalanine (Ser). Position 396 is a phosphothreonine (threonine 396). Serine 635 carries the phosphoserine modification. Threonine 637 is subject to Phosphothreonine. A Phosphoserine modification is found at serine 648.

This sequence belongs to the PAL/histidase family. Post-translationally, contains an active site 4-methylidene-imidazol-5-one (MIO), which is formed autocatalytically by cyclization and dehydration of residues Ala-Ser-Gly.

The enzyme catalyses L-histidine = trans-urocanate + NH4(+). It functions in the pathway amino-acid degradation; L-histidine degradation into L-glutamate; N-formimidoyl-L-glutamate from L-histidine: step 1/3. The protein is Histidine ammonia-lyase (HAL) of Homo sapiens (Human).